Reading from the N-terminus, the 331-residue chain is Biotin synthase (331 aa).

The region spanning 53-272 (NHVETASLLS…LATARVMMPR (220 aa)) is the Radical SAM core domain. Residues Cys-68, Cys-72, and Cys-75 each coordinate [4Fe-4S] cluster. The [2Fe-2S] cluster site is built by Cys-112, Cys-143, Cys-203, and Arg-276.

It belongs to the radical SAM superfamily. Biotin synthase family. In terms of assembly, homodimer. It depends on [4Fe-4S] cluster as a cofactor. Requires [2Fe-2S] cluster as cofactor.

The enzyme catalyses (4R,5S)-dethiobiotin + (sulfur carrier)-SH + 2 reduced [2Fe-2S]-[ferredoxin] + 2 S-adenosyl-L-methionine = (sulfur carrier)-H + biotin + 2 5'-deoxyadenosine + 2 L-methionine + 2 oxidized [2Fe-2S]-[ferredoxin]. It participates in cofactor biosynthesis; biotin biosynthesis; biotin from 7,8-diaminononanoate: step 2/2. Its function is as follows. Catalyzes the conversion of dethiobiotin (DTB) to biotin by the insertion of a sulfur atom into dethiobiotin via a radical-based mechanism. This is Biotin synthase from Bradyrhizobium diazoefficiens (strain JCM 10833 / BCRC 13528 / IAM 13628 / NBRC 14792 / USDA 110).